Reading from the N-terminus, the 750-residue chain is uncharacterized protein (750 aa).

This is an uncharacterized protein from Escherichia coli O157:H7.